Here is a 285-residue protein sequence, read N- to C-terminus: Zinc transporter ZupT (285 aa).

Transmembrane regions (helical) follow at residues 13–33 (AFLLTLLAGLATGIGSCIAFF), 41–61 (FLCVSLGFSAGVMIYVSMIEM), and 80–100 (WITVISFFAGIAIIALIDKFV). Fe(2+)-binding residues include Asn-153 and Glu-156. Glu-156 provides a ligand contact to Zn(2+). Residues 160 to 180 (TFVSALEGASLAIPITIAIAI) traverse the membrane as a helical segment. His-181 is a binding site for Zn(2+). Positions 182, 185, and 214 each coordinate Fe(2+). Glu-185 contacts Zn(2+). The next 3 membrane-spanning stretches (helical) occupy residues 204–224 (FLYSFLSGMSEPIGAIIGYTL), 228–248 (IFNDITLGILLSAVAGIMVFI), and 265–285 (LAIYGLIAGMVVMAVSLLLFI).

Belongs to the ZIP transporter (TC 2.A.5) family. ZupT subfamily.

It is found in the cell membrane. It carries out the reaction Zn(2+)(in) = Zn(2+)(out). Functionally, mediates zinc uptake. May also transport other divalent cations. This Clostridium perfringens (strain 13 / Type A) protein is Zinc transporter ZupT.